The primary structure comprises 423 residues: Carboxypeptidase B2 (423 aa).

The signal sequence occupies residues 1–22 (MKLYSLGVLVATVLFCGEHAFA). Positions 23 to 114 (FQRGQVLSAL…QTSNDTISPR (92 aa)) are cleaved as a propeptide — activation peptide. N-linked (GlcNAc...) asparagine glycans are attached at residues Asn-44, Asn-73, Asn-85, and Asn-108. Residues 122-419 (QYHSLNEIYS…VAVAKIASHV (298 aa)) enclose the Peptidase M14 domain. An intrachain disulfide couples Cys-178 to Cys-191. The Zn(2+) site is built by His-181 and Glu-184. Substrate contacts are provided by residues 181–184 (HARE) and Arg-239. Asn-241 carries an N-linked (GlcNAc...) asparagine glycan. Intrachain disulfides connect Cys-250–Cys-274 and Cys-265–Cys-279. A substrate-binding site is contributed by 256 to 257 (NR). His-310 serves as a coordination point for Zn(2+). Residues 311–312 (SY) and Tyr-363 each bind substrate. Residue Glu-385 is the Proton donor/acceptor of the active site.

Belongs to the peptidase M14 family. Requires Zn(2+) as cofactor.

It is found in the secreted. It carries out the reaction Release of C-terminal Arg and Lys from a polypeptide.. TAFI/CPB2 is unique among carboxypeptidases in that it spontaneously inactivates with a short half-life, a property that is crucial for its role in controlling blood clot lysis. The zymogen is stabilized by interactions with the activation peptide. Release of the activation peptide increases a dynamic flap mobility and in time this leads to conformational changes that disrupt the catalytic site and expose a cryptic thrombin-cleavage site present at Arg-324. In terms of biological role, cleaves C-terminal arginine or lysine residues from biologically active peptides such as kinins or anaphylatoxins in the circulation thereby regulating their activities. Down-regulates fibrinolysis by removing C-terminal lysine residues from fibrin that has already been partially degraded by plasmin. The protein is Carboxypeptidase B2 (CPB2) of Bos taurus (Bovine).